The chain runs to 274 residues: Thiamine kinase (274 aa).

Belongs to the thiamine kinase family.

The catalysed reaction is thiamine + ATP = thiamine phosphate + ADP + H(+). It functions in the pathway cofactor biosynthesis; thiamine diphosphate biosynthesis; thiamine phosphate from thiamine: step 1/1. Functionally, catalyzes the ATP-dependent phosphorylation of thiamine to thiamine phosphate. Is involved in thiamine salvage. The polypeptide is Thiamine kinase (Escherichia coli O157:H7 (strain EC4115 / EHEC)).